Consider the following 175-residue polypeptide: Photosynthetic NDH subunit of subcomplex B 4, chloroplastic (175 aa).

Residues 1 to 24 (MAEAFTSFTFTNLHIPSSYNHSPK) constitute a chloroplast transit peptide. A helical membrane pass occupies residues 95 to 111 (VYMFYIMFTCWGCLYFG).

In terms of assembly, part of the chloroplast NDH complex, composed of a mixture of chloroplast and nucleus encoded subunits. Component of the NDH subcomplex B, at least composed of PnsB1, PnsB2, PnsB3, PnsB4 and PnsB5.

It is found in the plastid. The protein localises to the chloroplast thylakoid membrane. In terms of biological role, NDH shuttles electrons from NAD(P)H:plastoquinone, via FMN and iron-sulfur (Fe-S) centers, to quinones in the photosynthetic chain and possibly in a chloroplast respiratory chain. The immediate electron acceptor for the enzyme in this species is believed to be plastoquinone. Couples the redox reaction to proton translocation, and thus conserves the redox energy in a proton gradient. This is Photosynthetic NDH subunit of subcomplex B 4, chloroplastic from Arabidopsis thaliana (Mouse-ear cress).